A 50-amino-acid chain; its full sequence is uncharacterized protein (50 aa).

This is an uncharacterized protein from His1 virus (isolate Australia/Victoria) (His1V).